The chain runs to 327 residues: Cyclic AMP-responsive element-binding protein 1 (327 aa).

Disordered stretches follow at residues 1 to 29 (MTMD…TVQA) and 94 to 113 (SEDS…RREI). The KID domain maps to 8-146 (DNQQSGDAAV…IEEEKSEEET (139 aa)). The segment covering 20–29 (AESQQMTVQA) has biased composition (polar residues). Phosphoserine; by CaMK1, CaMK2, CaMK4, PKB/AKT1 or PKB/AKT2, RPS6KA3, RPS6KA4, RPS6KA5 and SGK1 is present on Ser119. Lys122 is covalently cross-linked (Glycyl lysine isopeptide (Lys-Gly) (interchain with G-Cter in SUMO2)). The tract at residues 126–149 (DLSSDAPGVPRIEEEKSEEETSAP) is disordered. The residue at position 128 (Ser128) is a Phosphoserine; by CaMK2. Phosphoserine; by HIPK2 is present on Ser257. A bZIP domain is found at 269–327 (ARKREVRLMKNREAARECRRKKKEYVKCLENRVAVLENQNKTLIEELKALKDLYCHKSD). Residues 270–295 (RKREVRLMKNREAARECRRKKKEYVK) are basic motif. Residues Lys271 and Lys290 each participate in a glycyl lysine isopeptide (Lys-Gly) (interchain with G-Cter in SUMO1) cross-link. Residues 297–318 (LENRVAVLENQNKTLIEELKAL) are leucine-zipper.

It belongs to the bZIP family. Interacts with PPRC1. Binds DNA as a dimer. This dimer is stabilized by magnesium ions. Interacts, through the bZIP domain, with the coactivators CRTC1/TORC1, CRTC2/TORC2 and CRTC3/TORC3. When phosphorylated on Ser-119, binds CREBBP. Interacts with CREBL2; regulates CREB1 phosphorylation, stability and transcriptional activity. Interacts (phosphorylated form) with TOX3. Interacts with ARRB1. Binds to HIPK2. Interacts with SGK1. Interacts with TSSK4; this interaction facilitates phosphorylation on Ser-119. Forms a complex with KMT2A and CREBBP. Interacts with TOX4; CREB1 is required for full induction of TOX4-dependent activity and the interaction is increased by cAMP and inhibited by insulin. Phosphorylation of Ser-119 allows CREBBP binding. Stimulated by phosphorylation. Phosphorylation of both Ser-128 and Ser-119 in the SCN regulates the activity of CREB and participate in circadian rhythm generation. Phosphorylated upon calcium influx by CaMK4 and CaMK2 on Ser-119. CaMK4 is much more potent than CaMK2 in activating CREB. Phosphorylated by CaMK2 on Ser-128. Phosphorylation of Ser-128 blocks CREB-mediated transcription even when Ser-119 is phosphorylated. Phosphorylated by CaMK1. Phosphorylation of Ser-257 by HIPK2 in response to genotoxic stress promotes CREB1 activity, facilitating the recruitment of the coactivator CBP. Phosphorylated at Ser-119 by RPS6KA3, RPS6KA4 and RPS6KA5 in response to mitogenic or stress stimuli. CREBL2 positively regulates phosphorylation at Ser-119 thereby stimulating CREB1 transcriptional activity. In liver, phosphorylation is induced by fasting or glucagon in a circadian fashion. Phosphorylated by TSSK4 on Ser-119. In terms of processing, sumoylated with SUMO1. Sumoylation on Lys-290, but not on Lys-271, is required for nuclear localization of this protein. Sumoylation is enhanced under hypoxia, promoting nuclear localization and stabilization.

It localises to the nucleus. In terms of biological role, phosphorylation-dependent transcription factor that stimulates transcription upon binding to the DNA cAMP response element (CRE), a sequence present in many viral and cellular promoters. Transcription activation is enhanced by the TORC coactivators which act independently of Ser-119 phosphorylation. Involved in different cellular processes including the synchronization of circadian rhythmicity and the differentiation of adipose cells. Regulates the expression of apoptotic and inflammatory response factors in cardiomyocytes in response to ERFE-mediated activation of AKT signaling. This Rattus norvegicus (Rat) protein is Cyclic AMP-responsive element-binding protein 1 (Creb1).